A 231-amino-acid polypeptide reads, in one-letter code: Orotidine 5'-phosphate decarboxylase (231 aa).

Residues Asp11, Lys33, 60-69 (DLKFHDIPNT), Thr117, Arg178, Gln187, Gly207, and Arg208 each bind substrate. The active-site Proton donor is Lys62.

This sequence belongs to the OMP decarboxylase family. Type 1 subfamily. As to quaternary structure, homodimer.

The enzyme catalyses orotidine 5'-phosphate + H(+) = UMP + CO2. It participates in pyrimidine metabolism; UMP biosynthesis via de novo pathway; UMP from orotate: step 2/2. Functionally, catalyzes the decarboxylation of orotidine 5'-monophosphate (OMP) to uridine 5'-monophosphate (UMP). The sequence is that of Orotidine 5'-phosphate decarboxylase from Nitrosomonas eutropha (strain DSM 101675 / C91 / Nm57).